A 352-amino-acid polypeptide reads, in one-letter code: MTSRETRAADAAGARQADAQVRSSIDVPPDLVVGLLGSADENLRALERTLSADLHVRGNAVTLCGEPADVALAERVISELIAIVASGQSLTPEVVRHSVAMLVGTGNESPAEVLTLDILSRRGKTIRPKTLNQKRYVDAIDANTIVFGIGPAGTGKTYLAMAKAVHALQTKQVTRIILTRPAVEAGERLGFLPGTLSEKIDPYLRPLYDALYDMMDPELIPKLMSAGVIEVAPLAYMRGRTLNDAFIVLDEAQNTTAEQMKMFLTRLGFGSKVVVTGDVTQIDLPGGARSGLRAAVDILEDIDDIHIAELTSVDVVRHRLVSEIVDAYARYEEPGSGLNRAARRASGARGRR.

Positions 1-21 (MTSRETRAADAAGARQADAQV) are disordered. Over residues 9–20 (ADAAGARQADAQ) the composition is skewed to low complexity. ATP is bound at residue 150-157 (GPAGTGKT).

The protein belongs to the PhoH family.

It localises to the cytoplasm. The sequence is that of PhoH-like protein from Mycobacterium bovis (strain ATCC BAA-935 / AF2122/97).